Here is a 144-residue protein sequence, read N- to C-terminus: Large ribosomal subunit protein uL16 (144 aa).

This sequence belongs to the universal ribosomal protein uL16 family. Part of the 50S ribosomal subunit.

Functionally, binds 23S rRNA and is also seen to make contacts with the A and possibly P site tRNAs. The chain is Large ribosomal subunit protein uL16 from Caldanaerobacter subterraneus subsp. tengcongensis (strain DSM 15242 / JCM 11007 / NBRC 100824 / MB4) (Thermoanaerobacter tengcongensis).